An 873-amino-acid chain; its full sequence is Leucine--tRNA ligase (873 aa).

The 'HIGH' region signature appears at 48-58; it reads PYPSGKLHMGH. The 'KMSKS' region motif lies at 636–640; that stretch reads KMSKS. Lys639 contributes to the ATP binding site.

Belongs to the class-I aminoacyl-tRNA synthetase family.

The protein resides in the cytoplasm. The catalysed reaction is tRNA(Leu) + L-leucine + ATP = L-leucyl-tRNA(Leu) + AMP + diphosphate. This Cupriavidus metallidurans (strain ATCC 43123 / DSM 2839 / NBRC 102507 / CH34) (Ralstonia metallidurans) protein is Leucine--tRNA ligase.